A 134-amino-acid chain; its full sequence is uncharacterized protein (134 aa).

An HTH tetR-type domain is found at 10 to 70 (KETRQRIIDA…AVLASRQHPL (61 aa)). The H-T-H motif DNA-binding region spans 33–52 (TLDQIARKAGVTRGAVYWHF).

Its function is as follows. Unknown, does not seem to be involved in regulation of the ttgGHI or ttgVW operons. This is an uncharacterized protein from Pseudomonas putida (strain DOT-T1E).